A 334-amino-acid polypeptide reads, in one-letter code: WD repeat domain 54 (334 aa).

WD repeat units follow at residues 162–206 (GHQT…TLLT), 208–247 (IAGF…LHIQ), and 250–289 (AHAR…ESGS).

Homodimer and homotrimer; forms tight forms of dimers and trimers. Interacts with IZUMO1 and IZUMO1R/JUNO. In terms of processing, cross-linked to tightly form both dimers and trimers by TGM2. Cross-linking enhances the activation of EGF receptor-mediated signaling pathway. Cross-linking is inhibited by EGF. Ubiquitinated. EGF increases ubiquitination. Widely expressed in the ovary and testis (at protein level).

Its subcellular location is the vesicle. It is found in the cytoplasm. It localises to the cell membrane. Functionally, plays a role in the adhesion and fusion of the sperm-oocyte membrane through its interactions with IZUMO1 and IZUMO1R/JUNO. When cross-linked to form dimers and trimers, it has a regulatory effect on ERK signaling pathway activity in response to EGF stimulation. Colocalizes with the EGF receptor in WDR54-specific vesicle where it sustains the internalization and controls the degradation of the EGF receptor after EGF stimulation. In Rattus norvegicus (Rat), this protein is WD repeat domain 54 (Wdr54).